A 210-amino-acid polypeptide reads, in one-letter code: Ribosomal RNA small subunit methyltransferase G (210 aa).

S-adenosyl-L-methionine is bound by residues Gly-76, Met-81, 127–128, and Arg-145; that span reads VE.

The protein belongs to the methyltransferase superfamily. RNA methyltransferase RsmG family.

It localises to the cytoplasm. It catalyses the reaction guanosine(527) in 16S rRNA + S-adenosyl-L-methionine = N(7)-methylguanosine(527) in 16S rRNA + S-adenosyl-L-homocysteine. Its function is as follows. Specifically methylates the N7 position of guanine in position 527 of 16S rRNA. In Acinetobacter baumannii (strain SDF), this protein is Ribosomal RNA small subunit methyltransferase G.